Here is a 612-residue protein sequence, read N- to C-terminus: Dihydroxy-acid dehydratase (612 aa).

Asp81 serves as a coordination point for Mg(2+). [2Fe-2S] cluster is bound at residue Cys122. Asp123 and Lys124 together coordinate Mg(2+). Lys124 is modified (N6-carboxylysine). Cys193 is a binding site for [2Fe-2S] cluster. Position 489 (Glu489) interacts with Mg(2+). Residue Ser515 is the Proton acceptor of the active site.

This sequence belongs to the IlvD/Edd family. As to quaternary structure, homodimer. Requires [2Fe-2S] cluster as cofactor. Mg(2+) is required as a cofactor.

It carries out the reaction (2R)-2,3-dihydroxy-3-methylbutanoate = 3-methyl-2-oxobutanoate + H2O. The enzyme catalyses (2R,3R)-2,3-dihydroxy-3-methylpentanoate = (S)-3-methyl-2-oxopentanoate + H2O. It functions in the pathway amino-acid biosynthesis; L-isoleucine biosynthesis; L-isoleucine from 2-oxobutanoate: step 3/4. It participates in amino-acid biosynthesis; L-valine biosynthesis; L-valine from pyruvate: step 3/4. Its function is as follows. Functions in the biosynthesis of branched-chain amino acids. Catalyzes the dehydration of (2R,3R)-2,3-dihydroxy-3-methylpentanoate (2,3-dihydroxy-3-methylvalerate) into 2-oxo-3-methylpentanoate (2-oxo-3-methylvalerate) and of (2R)-2,3-dihydroxy-3-methylbutanoate (2,3-dihydroxyisovalerate) into 2-oxo-3-methylbutanoate (2-oxoisovalerate), the penultimate precursor to L-isoleucine and L-valine, respectively. The protein is Dihydroxy-acid dehydratase of Pseudomonas paraeruginosa (strain DSM 24068 / PA7) (Pseudomonas aeruginosa (strain PA7)).